Here is a 131-residue protein sequence, read N- to C-terminus: Small ribosomal subunit protein uS9 (131 aa).

The protein belongs to the universal ribosomal protein uS9 family.

This Mycoplasmopsis synoviae (strain 53) (Mycoplasma synoviae) protein is Small ribosomal subunit protein uS9.